We begin with the raw amino-acid sequence, 157 residues long: NADPH-dependent 7-cyano-7-deazaguanine reductase (157 aa).

The active-site Thioimide intermediate is the C55. The Proton donor role is filled by D62. Residues 77–79 (VES) and 96–97 (HE) contribute to the substrate site.

This sequence belongs to the GTP cyclohydrolase I family. QueF type 1 subfamily.

The protein resides in the cytoplasm. It catalyses the reaction 7-aminomethyl-7-carbaguanine + 2 NADP(+) = 7-cyano-7-deazaguanine + 2 NADPH + 3 H(+). The protein operates within tRNA modification; tRNA-queuosine biosynthesis. Functionally, catalyzes the NADPH-dependent reduction of 7-cyano-7-deazaguanine (preQ0) to 7-aminomethyl-7-deazaguanine (preQ1). This Neisseria meningitidis serogroup A / serotype 4A (strain DSM 15465 / Z2491) protein is NADPH-dependent 7-cyano-7-deazaguanine reductase.